Reading from the N-terminus, the 442-residue chain is Vacuolar zinc transporter ZRC1 (442 aa).

At 1–8 the chain is on the cytoplasmic side; the sequence is MITGKELR. The chain crosses the membrane as a helical span at residues 9-29; that stretch reads IISLLTLDTVFFLLEITIGYM. At 30–32 the chain is on the vacuolar side; the sequence is SHS. The chain crosses the membrane as a helical span at residues 33–53; sequence LALIADSFHMLNDIISLLVAL. Residues 54-75 lie on the Cytoplasmic side of the membrane; sequence WAVDVAKNRGPDAKYTYGWKRA. The helical transmembrane segment at 76 to 96 threads the bilayer; sequence EILGALINAVFLIALCFSIMI. At 97–112 the chain is on the vacuolar side; the sequence is EALQRLIEPQEIQNPR. Residues 113–133 traverse the membrane as a helical segment; it reads LVLYVGVAGLISNVVGLFLFH. Over 134–235 the chain is Cytoplasmic; that stretch reads DHGSDSLHSH…GHRSLNMHGV (102 aa). 3 consecutive short sequence motifs (histidine repeat) follow at residues 141 to 145, 163 to 167, and 216 to 220; these read HSHSH and HDHSH. 2 disordered regions span residues 141–170 and 208–227; these read HSHSHGSVESGNNDLDIESNATHSHSHASL and QPLLNHDDHDHSHESKKPGH. Polar residues predominate over residues 149 to 170; the sequence is ESGNNDLDIESNATHSHSHASL. Positions 212 to 224 are enriched in basic and acidic residues; that stretch reads NHDDHDHSHESKK. Residues 236 to 256 traverse the membrane as a helical segment; sequence FLHVLGDALGNIGVIAAALFI. Residues 257-265 are Vacuolar-facing; it reads WKTEYSWRY. Residues 266–286 traverse the membrane as a helical segment; sequence YSDPIVSLIITIIIFSSALPL. Over 287–442 the chain is Cytoplasmic; the sequence is SRRASRILLQ…AVNCNTSNCL (156 aa). Lysine 357 is covalently cross-linked (Glycyl lysine isopeptide (Lys-Gly) (interchain with G-Cter in ubiquitin)). Serine 387, serine 393, and serine 397 each carry phosphoserine. Residues 391–419 are disordered; it reads GGSPSSSQEAFDSHGNTEHGRKKRSPTAY.

It belongs to the cation diffusion facilitator (CDF) transporter (TC 2.A.4) family. SLC30A subfamily.

The protein resides in the vacuole membrane. The catalysed reaction is Zn(2+)(in) = Zn(2+)(out). In terms of biological role, vacuolar transporter that regulates zinc homeostasis by mediating zinc transport and storage into the vacuole. ZRC1 senses zinc availability in the cytosol, which might be performed through the histidine repeat motifs, and transports zinc from the cytosol to the vacuole if zinc in cytosol is abundant, conferring resistance to zinc toxicity. Plays a role in resistance to zinc shock resulting from sudden influx of zinc into cytoplasm when ZRT1 and ZRT2 are induced in response to zinc depletion. The polypeptide is Vacuolar zinc transporter ZRC1 (Saccharomyces cerevisiae (strain ATCC 204508 / S288c) (Baker's yeast)).